The sequence spans 67 residues: Transcription elongation factor Spt4 (67 aa).

Zn(2+) contacts are provided by cysteine 7, cysteine 10, cysteine 19, and cysteine 22.

This sequence belongs to the archaeal Spt4 family. In terms of assembly, heterodimer composed of Spt4 and Spt5. Interacts with RNA polymerase (RNAP). The complex interacts with FttA.

The protein resides in the chromosome. The Stp4-Spt5 complex stimulates transcription elongation on both naked DNA and histone-bound DNA (chromatin), facilitating transcription through the histone barrier. Neither protein functions alone. The complex also stimulates the transcription termination activity of FttA, neither protein alone stimulates FttA-dependent termination. The protein is Transcription elongation factor Spt4 of Thermococcus kodakarensis (strain ATCC BAA-918 / JCM 12380 / KOD1) (Pyrococcus kodakaraensis (strain KOD1)).